An 892-amino-acid polypeptide reads, in one-letter code: Putative ubiquitin carboxyl-terminal hydrolase 11 (892 aa).

The DUSP domain occupies tyrosine 17–isoleucine 132. A disordered region spans residues glutamate 69–serine 89. One can recognise a USP domain in the interval glycine 301–valine 880. Cysteine 310 serves as the catalytic Nucleophile. Residues asparagine 636 to glutamate 660 form a disordered region. The segment covering histidine 643–threonine 657 has biased composition (basic and acidic residues). Histidine 838 (proton acceptor) is an active-site residue.

It belongs to the peptidase C19 family.

The catalysed reaction is Thiol-dependent hydrolysis of ester, thioester, amide, peptide and isopeptide bonds formed by the C-terminal Gly of ubiquitin (a 76-residue protein attached to proteins as an intracellular targeting signal).. In terms of biological role, recognizes and hydrolyzes the peptide bond at the C-terminal Gly of ubiquitin. Involved in the processing of poly-ubiquitin precursors as well as that of ubiquitinated proteins. The polypeptide is Putative ubiquitin carboxyl-terminal hydrolase 11 (UBP11) (Arabidopsis thaliana (Mouse-ear cress)).